The following is a 190-amino-acid chain: Guanylate kinase (190 aa).

The region spanning 3-185 (NYIFIISAPS…SLEQLCKYFE (183 aa)) is the Guanylate kinase-like domain. ATP is bound at residue 10-17 (APSGAGKS).

It belongs to the guanylate kinase family.

The protein localises to the cytoplasm. The catalysed reaction is GMP + ATP = GDP + ADP. Functionally, essential for recycling GMP and indirectly, cGMP. This chain is Guanylate kinase, found in Francisella tularensis subsp. holarctica (strain LVS).